The chain runs to 388 residues: Lipid-A-disaccharide synthase (388 aa).

This sequence belongs to the LpxB family.

It carries out the reaction a lipid X + a UDP-2-N,3-O-bis[(3R)-3-hydroxyacyl]-alpha-D-glucosamine = a lipid A disaccharide + UDP + H(+). Its pathway is bacterial outer membrane biogenesis; LPS lipid A biosynthesis. In terms of biological role, condensation of UDP-2,3-diacylglucosamine and 2,3-diacylglucosamine-1-phosphate to form lipid A disaccharide, a precursor of lipid A, a phosphorylated glycolipid that anchors the lipopolysaccharide to the outer membrane of the cell. In Burkholderia pseudomallei (strain 1710b), this protein is Lipid-A-disaccharide synthase.